The chain runs to 218 residues: Adenylate kinase (218 aa).

Residue glycine 10 to threonine 15 coordinates ATP. The segment at serine 30–valine 59 is NMP. Residues threonine 31, arginine 36, alanine 57–valine 59, glycine 85–arginine 88, and glutamine 92 contribute to the AMP site. The interval glycine 122 to aspartate 159 is LID. Residues arginine 123 and threonine 132 to tyrosine 133 each bind ATP. Residues arginine 156 and arginine 167 each coordinate AMP. Glycine 203 provides a ligand contact to ATP.

This sequence belongs to the adenylate kinase family. As to quaternary structure, monomer.

It localises to the cytoplasm. The enzyme catalyses AMP + ATP = 2 ADP. The protein operates within purine metabolism; AMP biosynthesis via salvage pathway; AMP from ADP: step 1/1. Its function is as follows. Catalyzes the reversible transfer of the terminal phosphate group between ATP and AMP. Plays an important role in cellular energy homeostasis and in adenine nucleotide metabolism. The chain is Adenylate kinase from Polaromonas sp. (strain JS666 / ATCC BAA-500).